Reading from the N-terminus, the 329-residue chain is GTP 3',8-cyclase (329 aa).

The 227-residue stretch at 8-234 (AFARKFYYLR…QLRQRSDGPA (227 aa)) folds into the Radical SAM core domain. Arg17 serves as a coordination point for GTP. [4Fe-4S] cluster-binding residues include Cys24 and Cys28. An S-adenosyl-L-methionine-binding site is contributed by Tyr30. [4Fe-4S] cluster is bound at residue Cys31. Arg68 lines the GTP pocket. Gly72 is an S-adenosyl-L-methionine binding site. Thr99 provides a ligand contact to GTP. Ser123 serves as a coordination point for S-adenosyl-L-methionine. Lys160 is a GTP binding site. Met194 contacts S-adenosyl-L-methionine. Positions 257 and 260 each coordinate [4Fe-4S] cluster. Residue 262-264 (RLR) participates in GTP binding. A [4Fe-4S] cluster-binding site is contributed by Cys274.

The protein belongs to the radical SAM superfamily. MoaA family. In terms of assembly, monomer and homodimer. It depends on [4Fe-4S] cluster as a cofactor.

The catalysed reaction is GTP + AH2 + S-adenosyl-L-methionine = (8S)-3',8-cyclo-7,8-dihydroguanosine 5'-triphosphate + 5'-deoxyadenosine + L-methionine + A + H(+). Its pathway is cofactor biosynthesis; molybdopterin biosynthesis. In terms of biological role, catalyzes the cyclization of GTP to (8S)-3',8-cyclo-7,8-dihydroguanosine 5'-triphosphate. In Salmonella dublin (strain CT_02021853), this protein is GTP 3',8-cyclase.